A 160-amino-acid chain; its full sequence is Transcription elongation factor GreA (160 aa).

Residues 3–84 (NIVDDKILLT…SKAKIIKADL (82 aa)) are a coiled coil.

This sequence belongs to the GreA/GreB family.

Necessary for efficient RNA polymerase transcription elongation past template-encoded arresting sites. The arresting sites in DNA have the property of trapping a certain fraction of elongating RNA polymerases that pass through, resulting in locked ternary complexes. Cleavage of the nascent transcript by cleavage factors such as GreA or GreB allows the resumption of elongation from the new 3'terminus. GreA releases sequences of 2 to 3 nucleotides. In Mesomycoplasma hyopneumoniae (strain J / ATCC 25934 / NCTC 10110) (Mycoplasma hyopneumoniae), this protein is Transcription elongation factor GreA.